The chain runs to 1088 residues: Extended synaptotagmin-1 (1088 aa).

Met-1 carries the post-translational modification N-acetylmethionine. Topologically, residues 1–30 (MERSPEEGAGPEPSGQSPATDSTRERDGGS) are cytoplasmic. The interval 1–38 (MERSPEEGAGPEPSGQSPATDSTRERDGGSGVPPAGPG) is disordered. The chain crosses the membrane as a helical span at residues 31–51 (GVPPAGPGAASEALAVLTSFG). Over 52–54 (RRL) the chain is Lumenal. Residues 55–75 (LVLVPVYLAGAAGLSVGFVLF) traverse the membrane as a helical segment. Topologically, residues 76 to 1088 (GLALYLGWRR…LIDDRDKGGS (1013 aa)) are cytoplasmic. Residues 127 to 305 (DVEKAEWLNK…LPNRLLVPLV (179 aa)) form the SMP-LTD domain. 4 consecutive C2 domains span residues 304-425 (LVPD…DNWY), 446-572 (DAEK…QLSS), 618-740 (DAPP…DEWL), and 771-888 (QVNS…ALSG). Position 316 is a phosphoserine; by CDK5 (Ser-316). Ca(2+) contacts are provided by Lys-336, Asp-337, Asp-349, Asp-396, Asp-398, Asp-400, Asp-402, and Asp-403. Residues 599-630 (TEPGAQDWDSESPETGSSVDAPPRPYHTTPNS) are disordered. Lys-806 is modified (N6-acetyllysine). Position 809 is a phosphoserine (Ser-809). The interval 911 to 930 (HSHSSSSLNEEPEVLGDPTH) is disordered. Residues Ser-933 and Ser-947 each carry the phosphoserine modification. A C2 5 domain is found at 955 to 1077 (PLGQVKLTVW…DLSQGAAQWY (123 aa)). At Tyr-993 the chain carries Phosphotyrosine. The segment at 1002 to 1009 (KNRGTKRK) is required for phosphatidylinositol 4,5-bisphosphate-dependent location at the cell membrane.

It belongs to the extended synaptotagmin family. In terms of assembly, interacts with ESYT2 and ESYT3. Interacts with ADGRD1; inhibiting the G-protein-coupled receptor activity of ADGRD1. Interaction with ADGRD1 is abolished when cytosolic calcium increases, relieving ADGRD1 G-protein-coupled receptor activity. Interacts (phosphorylated form) with SLC2A4. In terms of processing, phosphorylated on Ser residues in insulin-treated adipocytes (in vitro); this promotes interaction with SLC2A4. Ubiquitously expressed with a higher expression in spleen and white adipose tissue.

The protein resides in the endoplasmic reticulum membrane. It is found in the cell membrane. Its function is as follows. Binds calcium (via the C2 domains) and translocates to sites of contact between the endoplasmic reticulum and the cell membrane in response to increased cytosolic calcium levels. Helps tether the endoplasmic reticulum to the cell membrane and promotes the formation of appositions between the endoplasmic reticulum and the cell membrane. Acts as an inhibitor of ADGRD1 G-protein-coupled receptor activity in absence of cytosolic calcium. Binds glycerophospholipids in a barrel-like domain and may play a role in cellular lipid transport. The protein is Extended synaptotagmin-1 (Esyt1) of Rattus norvegicus (Rat).